Here is a 132-residue protein sequence, read N- to C-terminus: Large ribosomal subunit protein uL14 (132 aa).

The protein belongs to the universal ribosomal protein uL14 family. In terms of assembly, part of the 50S ribosomal subunit. Forms a cluster with proteins L3 and L24e, part of which may contact the 16S rRNA in 2 intersubunit bridges.

Binds to 23S rRNA. Forms part of two intersubunit bridges in the 70S ribosome. This is Large ribosomal subunit protein uL14 from Methanosphaera stadtmanae (strain ATCC 43021 / DSM 3091 / JCM 11832 / MCB-3).